A 343-amino-acid chain; its full sequence is 3-dehydroquinate synthase (343 aa).

Residues 61-66, 95-99, 119-120, lysine 132, lysine 141, and 159-162 each bind NAD(+); these read SGEKYK, GVISD, TT, and FLKT. 3 residues coordinate Zn(2+): glutamate 174, histidine 231, and histidine 248.

Belongs to the sugar phosphate cyclases superfamily. Dehydroquinate synthase family. Requires NAD(+) as cofactor. The cofactor is Co(2+). Zn(2+) is required as a cofactor.

It localises to the cytoplasm. The enzyme catalyses 7-phospho-2-dehydro-3-deoxy-D-arabino-heptonate = 3-dehydroquinate + phosphate. It participates in metabolic intermediate biosynthesis; chorismate biosynthesis; chorismate from D-erythrose 4-phosphate and phosphoenolpyruvate: step 2/7. In terms of biological role, catalyzes the conversion of 3-deoxy-D-arabino-heptulosonate 7-phosphate (DAHP) to dehydroquinate (DHQ). This is 3-dehydroquinate synthase from Helicobacter pylori (strain J99 / ATCC 700824) (Campylobacter pylori J99).